Reading from the N-terminus, the 134-residue chain is Small ribosomal subunit protein bS16 (134 aa).

Residues 79-134 (AGIAKRPSRNNPTKGEPGKKAQERLALAKQAEEEAAAKAAEAAAAAAAPAEEAASE) are disordered. Positions 115–134 (AKAAEAAAAAAAPAEEAASE) are enriched in low complexity.

It belongs to the bacterial ribosomal protein bS16 family.

The polypeptide is Small ribosomal subunit protein bS16 (Brucella canis (strain ATCC 23365 / NCTC 10854 / RM-666)).